The sequence spans 502 residues: Cysteine protease RavZ (502 aa).

2 consecutive short sequence motifs (LIR) follow at residues 9–23 and 23–37; these read DKLI…GEQE and ESDI…GDEK. Residues 49–325 are catalytic region; that stretch reads SIYPPETSWE…ESALTEGKTL (277 aa). Residues His176 and Asp197 contribute to the active site. The alpha-3 helix stretch occupies residues 211-217; it reads YFKGKYR. Cys258 is an active-site residue. Residues 326-431 form a membrane targeting region region; that stretch reads PVQLSEFIVA…VLPCVKFDDT (106 aa). The short motif at 429–443 is the LIR 3 element; the sequence is DDTIDDFVTIEKDEL.

Its subcellular location is the secreted. The protein resides in the host cytoplasmic vesicle membrane. The catalysed reaction is [protein]-C-terminal L-amino acid-glycyl-phosphatidylethanolamide + H2O = a 1,2-diacyl-sn-glycero-3-phosphoethanolamine-N-glycine + [protein]-C-terminal &lt;stereo&gt;L-&lt;/stereo&gt;amino acid. The enzyme catalyses [protein]-C-terminal L-amino acid-glycyl-phosphatidylserine + H2O = 1,2-diacyl-sn-glycero-3-phospho-L-serine-N-glycine + [protein]-C-terminal &lt;stereo&gt;L-&lt;/stereo&gt;amino acid. Functionally, cysteine protease effector that inhibits host cell autophagy by targeting lipid-conjugated ATG8 family proteins on pre-autophagosomal structures. Specifically hydrolyzes the amide bond between the C-terminal glycine residue and an adjacent aromatic residue in ATG8 proteins conjugated to phosphatidylethanolamine (PE), producing an ATG8 protein that cannot be reconjugated by host ATG7 and ATG3. Mechanistically, Ravz interacts with ATG8 proteins conjugated to PE via its LIR motifs, extracts them from the membrane of autophagosomes and integrates the PE part into its own lipid-binding site. It then removes the lipid component of the ATG8 protein. Also able to mediate delipidation of ATG8 proteins conjugated to phosphatidylserine (PS) during non-canonical autophagy. Inhibits host ubiquitin recruitment to bacteria-containing vacuoles, suggesting that it is able to mediate delipidation of other proteins in addition to ATG8 proteins. It is however not involved in the exclusion of autophagy adapters from bacteria-containing vacuoles decorated with ubiquitin. This is Cysteine protease RavZ from Legionella pneumophila subsp. pneumophila (strain Philadelphia 1 / ATCC 33152 / DSM 7513).